We begin with the raw amino-acid sequence, 205 residues long: Enhancer of split mgamma protein (205 aa).

The bHLH domain occupies 15–72 (YRKVMKPMLERKRRARINKCLDELKDLMVATLESEGEHVTRLEKADILELTVTHLQKM). Residues 93-126 (FRSGYIHAVNEVSRSLSQLPGMNVSLGTQLMTHL) enclose the Orange domain. The short motif at 202–205 (WRPW) is the WRPW motif element.

As to quaternary structure, homodimer. Heterodimer with dpn. Might form higher-order oligomers. Transcription repression requires formation of a complex with a corepressor protein (Groucho). As to expression, expressed in sensory organ precursors in the wing, leg and eye imaginal disk.

It localises to the nucleus. In terms of biological role, transcriptional repressor of genes that require a bHLH protein for their transcription. May serve as a transcriptional regulator of the Achaete-scute complex (AS-C) genes. Contributes to the neural-epidermal lineage decision during early neurogenesis. Part of the Notch signaling pathway, plays a role in neuroblasts proliferation in embryos and larvae. In the larval brain, together with other self-renewal transcriptional repressors such as klu and dpn, required for type II neuroblast self-renewal and for maintaining erm in an inactive state in intermediate neural progenitors (INP) derived from type II neuroblasts. This Drosophila melanogaster (Fruit fly) protein is Enhancer of split mgamma protein.